The chain runs to 546 residues: Serine/threonine-protein kinase Chk2 (546 aa).

The segment at 1 to 70 (MKSHHQSHSS…SSHSSSGTLS (70 aa)) is disordered. Residues 8–70 (HSSTSSKAHD…SSHSSSGTLS (63 aa)) show a composition bias toward low complexity. Phosphothreonine; by MAP3K20 is present on threonine 68. Position 71 is a phosphoserine; by PLK3 (serine 71). Phosphothreonine; by ATM and MAP3K20 is present on threonine 77. At serine 82 the chain carries Phosphoserine; by PLK3. Residues 117 to 179 (YWFGRDKSCE…NGTFVNTELI (63 aa)) enclose the FHA domain. A Protein kinase domain is found at 224–490 (YIMSKTLGSG…TEEALNHPWL (267 aa)). Residues 231–238 (GSGACGEV), lysine 253, and 306–312 (ELMEGGE) contribute to the ATP site. The active-site Proton acceptor is the aspartate 351. ATP-binding positions include 355–356 (EN) and aspartate 372. The T-loop/activation segment stretch occupies residues 372-398 (DFGQSKILGETSLMRTLCGTPTYLAPE). Residue serine 383 is modified to Phosphoserine; by autocatalysis. 2 positions are modified to phosphothreonine; by autocatalysis: threonine 387 and threonine 391. A Phosphoserine modification is found at serine 460.

This sequence belongs to the protein kinase superfamily. CAMK Ser/Thr protein kinase family. CHK2 subfamily. In terms of assembly, homodimer. Homodimerization is part of the activation process but the dimer may dissociate following activation. Interacts with PML. Interacts with TP53. Interacts with RB1; phosphorylates RB1. Interacts with BRCA1. Interacts (phosphorylated at Thr-68) with MDC1; requires ATM-mediated phosphorylation of CHEK2. Interacts with TP53BP1; modulates CHEK2 phosphorylation at Thr-68 in response to ionizing radiation. Interacts with CDC25A; phosphorylates CDC25A and mediates its degradation in response to ionizing radiation. Interacts with CUL1; mediates CHEK2 ubiquitination and regulation. Interacts with CDKN2AIP. Interacts (via protein kinase domain) with CCAR2 (via N-terminus). Interacts with SIRT1. Mg(2+) serves as cofactor. Post-translationally, phosphorylated. Phosphorylated at Ser-82 by PLK3 in response to DNA damage, promoting phosphorylation at Thr-77 by ATM and the G2/M transition checkpoint. Phosphorylation at Thr-77 induces homodimerization. Autophosphorylates at Thr-387 and Thr-391 in the T-loop/activation segment upon dimerization to become fully active. DNA damage-induced autophosphorylation at Ser-383 induces CUL1-mediated ubiquitination and regulates the pro-apoptotic function. Phosphorylation at Ser-460 also regulates ubiquitination. Phosphorylated by PLK4. Ubiquitinated. CUL1-mediated ubiquitination regulates the pro-apoptotic function. Ubiquitination may also regulate protein stability. Ubiquitinated by RNF8 via 'Lys-48'-linked ubiquitination. As to expression, ubiquitously expressed with higher levels in the thymus, spleen and colon (at protein level).

It is found in the nucleus. Its subcellular location is the PML body. It localises to the nucleoplasm. The enzyme catalyses L-seryl-[protein] + ATP = O-phospho-L-seryl-[protein] + ADP + H(+). It carries out the reaction L-threonyl-[protein] + ATP = O-phospho-L-threonyl-[protein] + ADP + H(+). Activated through phosphorylation at Thr-68 by ATM in response to DNA double-strand breaks. Activation is modulated by several mediators including MDC1 and TP53BP1. Induces homodimerization with exchange of the T-loop/activation segment between protomers and transphosphorylation of the protomers. The autophosphorylated kinase dimer is fully active. Negatively regulated by PPM1D through dephosphorylation of Thr-68. In terms of biological role, serine/threonine-protein kinase which is required for checkpoint-mediated cell cycle arrest, activation of DNA repair and apoptosis in response to the presence of DNA double-strand breaks. May also negatively regulate cell cycle progression during unperturbed cell cycles. Following activation, phosphorylates numerous effectors preferentially at the consensus sequence [L-X-R-X-X-S/T]. Regulates cell cycle checkpoint arrest through phosphorylation of CDC25A, CDC25B and CDC25C, inhibiting their activity. Inhibition of CDC25 phosphatase activity leads to increased inhibitory tyrosine phosphorylation of CDK-cyclin complexes and blocks cell cycle progression. May also phosphorylate NEK6 which is involved in G2/M cell cycle arrest. Regulates DNA repair through phosphorylation of BRCA2, enhancing the association of RAD51 with chromatin which promotes DNA repair by homologous recombination. Also stimulates the transcription of genes involved in DNA repair (including BRCA2) through the phosphorylation and activation of the transcription factor FOXM1. Regulates apoptosis through the phosphorylation of p53/TP53, MDM4 and PML. Phosphorylation of p53/TP53 at 'Ser-20' by CHEK2 may alleviate inhibition by MDM2, leading to accumulation of active p53/TP53. Phosphorylation of MDM4 may also reduce degradation of p53/TP53. Also controls the transcription of pro-apoptotic genes through phosphorylation of the transcription factor E2F1. Tumor suppressor, it may also have a DNA damage-independent function in mitotic spindle assembly by phosphorylating BRCA1. Its absence may be a cause of the chromosomal instability observed in some cancer cells. Promotes the CCAR2-SIRT1 association and is required for CCAR2-mediated SIRT1 inhibition. Under oxidative stress, promotes ATG7 ubiquitination by phosphorylating the E3 ubiquitin ligase TRIM32 at 'Ser-56' leading to positive regulation of the autophagosme assembly. This is Serine/threonine-protein kinase Chk2 from Mus musculus (Mouse).